The following is a 95-amino-acid chain: Aspartyl/glutamyl-tRNA(Asn/Gln) amidotransferase subunit C (95 aa).

Belongs to the GatC family. As to quaternary structure, heterotrimer of A, B and C subunits.

It catalyses the reaction L-glutamyl-tRNA(Gln) + L-glutamine + ATP + H2O = L-glutaminyl-tRNA(Gln) + L-glutamate + ADP + phosphate + H(+). It carries out the reaction L-aspartyl-tRNA(Asn) + L-glutamine + ATP + H2O = L-asparaginyl-tRNA(Asn) + L-glutamate + ADP + phosphate + 2 H(+). Functionally, allows the formation of correctly charged Asn-tRNA(Asn) or Gln-tRNA(Gln) through the transamidation of misacylated Asp-tRNA(Asn) or Glu-tRNA(Gln) in organisms which lack either or both of asparaginyl-tRNA or glutaminyl-tRNA synthetases. The reaction takes place in the presence of glutamine and ATP through an activated phospho-Asp-tRNA(Asn) or phospho-Glu-tRNA(Gln). This is Aspartyl/glutamyl-tRNA(Asn/Gln) amidotransferase subunit C from Bradyrhizobium sp. (strain ORS 278).